The following is a 131-amino-acid chain: UPF0102 protein YraN (131 aa).

Residues 1–19 (MATVPTRSGSPRQLTTKQT) are compositionally biased toward polar residues. Positions 1 to 20 (MATVPTRSGSPRQLTTKQTG) are disordered.

This sequence belongs to the UPF0102 family.

The polypeptide is UPF0102 protein YraN (Escherichia fergusonii (strain ATCC 35469 / DSM 13698 / CCUG 18766 / IAM 14443 / JCM 21226 / LMG 7866 / NBRC 102419 / NCTC 12128 / CDC 0568-73)).